The chain runs to 354 residues: Probable L-ascorbate-6-phosphate lactonase UlaG (354 aa).

The protein belongs to the UlaG family. It depends on a divalent metal cation as a cofactor.

Its subcellular location is the cytoplasm. It carries out the reaction L-ascorbate 6-phosphate + H2O = 3-dehydro-L-gulonate 6-phosphate. It functions in the pathway cofactor degradation; L-ascorbate degradation; D-xylulose 5-phosphate from L-ascorbate: step 1/4. Functionally, probably catalyzes the hydrolysis of L-ascorbate-6-P into 3-keto-L-gulonate-6-P. Is essential for L-ascorbate utilization under anaerobic conditions. This chain is Probable L-ascorbate-6-phosphate lactonase UlaG, found in Escherichia fergusonii (strain ATCC 35469 / DSM 13698 / CCUG 18766 / IAM 14443 / JCM 21226 / LMG 7866 / NBRC 102419 / NCTC 12128 / CDC 0568-73).